Reading from the N-terminus, the 521-residue chain is Importin subunit alpha-3 (521 aa).

At Ala-2 the chain carries N-acetylalanine. The IBB domain occupies 2–58; the sequence is ADNEKLDNQRLKNFKNKGRDLETMRRQRNEVVVELRKNKRDEHLLKRRNVPQEDICE. The short motif at 43-52 is the Nuclear localization signal element; that stretch reads EHLLKRRNVP. Ser-60 carries the post-translational modification Phosphoserine. Residues 66-106 form an ARM 1; truncated repeat; it reads YRVQNTSLEAIVQNASSDNQGIQLSAVQAARKLLSSDRNPP. ARM repeat units follow at residues 107–149, 150–194, 195–233, 234–278, 279–318, 319–360, 361–400, and 401–443; these read IDDL…TSEQ, TQAV…CRDY, VISL…HKDP, PPPM…EQIQ, MVID…TDEQ, TQVV…NQQQ, VQAV…ISGR, and KDQV…KMAE. The interval 137-229 is NLS binding site (major); the sequence is WALTNIASGT…VTWVMVNLCR (93 aa). An NLS binding site (minor) region spans residues 306–394; the sequence is RAVGNIVTGT…QKEAAWAISN (89 aa). Residues 447-485 form an ARM 10; atypical repeat; that stretch reads ETIANLIEECGGLEKIEQLQNHENEDIYKLAYEIIDQFF.

The protein belongs to the importin alpha family. Forms a complex with importin subunit beta-1 (KPNB1). Interacts with SNAI1. Interacts with TALDO1 isoform 1. Interacts with CYB1. In terms of tissue distribution, detected more or less in all tissues examined (Ehrlich ascites tumor cells, testis, kidney, spleen, liver, heart, lung, thymus, skeletal muscle, cerebellum and brain (without cerebellum)). Multiple-sized transcripts were highly expressed, especially in testis.

The protein localises to the cytoplasm. It is found in the nucleus. Functions in nuclear protein import as an adapter protein for nuclear receptor KPNB1. Binds specifically and directly to substrates containing either a simple or bipartite NLS motif. Docking of the importin/substrate complex to the nuclear pore complex (NPC) is mediated by KPNB1 through binding to nucleoporin FxFG repeats and the complex is subsequently translocated through the pore by an energy requiring, Ran-dependent mechanism. At the nucleoplasmic side of the NPC, Ran binds to importin-beta and the three components separate and importin-alpha and -beta are re-exported from the nucleus to the cytoplasm where GTP hydrolysis releases Ran from importin. The directionality of nuclear import is thought to be conferred by an asymmetric distribution of the GTP- and GDP-bound forms of Ran between the cytoplasm and nucleus. Mediates nuclear import of AARS1, MRTFA and RANBP3. This is Importin subunit alpha-3 (Kpna4) from Mus musculus (Mouse).